A 102-amino-acid chain; its full sequence is Malonate decarboxylase acyl carrier protein (102 aa).

Position 27 is an O-(phosphoribosyl dephospho-coenzyme A)serine (Ser-27).

The protein belongs to the MdcC family. Covalently binds the prosthetic group of malonate decarboxylase.

It localises to the cytoplasm. Functionally, subunit of malonate decarboxylase, it is an acyl carrier protein to which acetyl and malonyl thioester residues are bound via a 2'-(5''-phosphoribosyl)-3'-dephospho-CoA prosthetic group and turn over during the catalytic mechanism. This is Malonate decarboxylase acyl carrier protein from Acinetobacter calcoaceticus.